A 215-amino-acid polypeptide reads, in one-letter code: Cytochrome b6 (215 aa).

A helical transmembrane segment spans residues 32–52; sequence IFYCLGGITLTCFIVQVATGF. Residue C35 participates in heme c binding. H86 and H100 together coordinate heme b. A run of 3 helical transmembrane segments spans residues 90-110, 116-136, and 186-206; these read ASMMVLMMILHVFRVYLTGGF, LTWITGVVLAVLTVSFGVTGY, and LHTFVLPLLTAVFMLMHFLMI. Residues H187 and H202 each coordinate heme b.

The protein belongs to the cytochrome b family. PetB subfamily. The 4 large subunits of the cytochrome b6-f complex are cytochrome b6, subunit IV (17 kDa polypeptide, PetD), cytochrome f and the Rieske protein, while the 4 small subunits are PetG, PetL, PetM and PetN. The complex functions as a dimer. Heme b serves as cofactor. Requires heme c as cofactor.

The protein resides in the plastid. Its subcellular location is the chloroplast thylakoid membrane. In terms of biological role, component of the cytochrome b6-f complex, which mediates electron transfer between photosystem II (PSII) and photosystem I (PSI), cyclic electron flow around PSI, and state transitions. The polypeptide is Cytochrome b6 (Chara vulgaris (Common stonewort)).